The sequence spans 356 residues: DNA polymerase IV (356 aa).

In terms of domain architecture, UmuC spans 6 to 187 (IIHIDMDYFF…LDIGDFPGVG (182 aa)). Asp10 and Asp105 together coordinate Mg(2+). Residue Glu106 is part of the active site.

The protein belongs to the DNA polymerase type-Y family. Monomer. Mg(2+) is required as a cofactor.

It localises to the cytoplasm. The catalysed reaction is DNA(n) + a 2'-deoxyribonucleoside 5'-triphosphate = DNA(n+1) + diphosphate. In terms of biological role, poorly processive, error-prone DNA polymerase involved in untargeted mutagenesis. Copies undamaged DNA at stalled replication forks, which arise in vivo from mismatched or misaligned primer ends. These misaligned primers can be extended by PolIV. Exhibits no 3'-5' exonuclease (proofreading) activity. May be involved in translesional synthesis, in conjunction with the beta clamp from PolIII. This is DNA polymerase IV from Staphylococcus aureus (strain JH1).